A 366-amino-acid chain; its full sequence is MPTETLQTGSMVKPVSPAGTFTSAVPLRILNKGPDYFRRQAEPNPKRLSAVERLEADKAKYVKSQEVINAKQEPVKPAVLAKPPVCPGTKRALGSPTLKVFGNHAKTESGVQRETLKLEILKNIINSSEGSSSGSGHKHSSRNWPPHRDTTDLHRHSFAESLKVYPTPGHGSPQESSSHVSRRLLEQSAETFLHVSHSSSDIRKVTSVKPLKAIPCSSSAPPLPPKPKVAAMKSPEADQVEPACGVSRRPSLQRSKSDLSDRYFRVDADVERFFNYCGLDPEELENLGMENFARANSDIISLNFRSASMISSDCEQSQDSNSDLRNDDSANDRVPYGISAIERNARIIKWLYSIKQARESQKVSHV.

3 disordered regions span residues 127–152 (SSEG…DTTD), 163–182 (KVYP…HVSR), and 216–252 (CSSS…RPSL). Ser-234 and Ser-297 each carry phosphoserine. Residues 313–333 (DCEQSQDSNSDLRNDDSANDR) are disordered. Residues 322-331 (SDLRNDDSAN) are compositionally biased toward basic and acidic residues.

Belongs to the FAM110 family.

It localises to the cytoplasm. It is found in the cytoskeleton. The protein resides in the microtubule organizing center. The protein localises to the centrosome. In Mus musculus (Mouse), this protein is Protein FAM110B (Fam110b).